We begin with the raw amino-acid sequence, 481 residues long: Phosphoglycerate kinase 1, chloroplastic (481 aa).

The N-terminal 75 residues, 1 to 75 (MASAAASSAF…VRGKGSRGVV (75 aa)), are a transit peptide targeting the chloroplast. S81 is modified (phosphoserine). A99, D100, N102, R116, T138, H139, G141, R142, R197, H229, and R230 together coordinate (2R)-3-phosphoglycerate. An ADP-binding site is contributed by G275. G275 is a CDP binding site. K277 and K281 together coordinate AMP. K281 provides a ligand contact to ATP. G299 is an ADP binding site. Residue G299 participates in CDP binding. AMP is bound by residues G300 and G372. Residues G300 and G372 each contribute to the ATP site. The CDP site is built by G397 and F402. Residue F402 coordinates ADP. An AMP-binding site is contributed by E403. Residues E403, D434, and S435 each contribute to the ATP site. Residue D434 coordinates Mg(2+).

The protein belongs to the phosphoglycerate kinase family. As to quaternary structure, monomer. Binds to FTSZ2-1 and FTSZ2-2. Mg(2+) is required as a cofactor.

Its subcellular location is the plastid. The protein resides in the chloroplast. It catalyses the reaction (2R)-3-phosphoglycerate + ATP = (2R)-3-phospho-glyceroyl phosphate + ADP. Its pathway is carbohydrate biosynthesis; Calvin cycle. Functionally, may trigger the phosphorylation of FTSZ2-1 and FTSZ2-2. This is Phosphoglycerate kinase 1, chloroplastic from Arabidopsis thaliana (Mouse-ear cress).